The sequence spans 284 residues: Proteasome subunit pbs-5 (284 aa).

A propeptide spans Met1–Gly64 (removed in mature form). Residue Thr65 is the Nucleophile of the active site.

This sequence belongs to the peptidase T1B family. The 26S proteasome consists of a 20S proteasome core and two 19S regulatory subunits. The 20S proteasome core is composed of 28 subunits that are arranged in four stacked rings, resulting in a barrel-shaped structure. The two end rings are each formed by seven alpha subunits, and the two central rings are each formed by seven beta subunits. The catalytic chamber with the active sites is on the inside of the barrel.

Its subcellular location is the cytoplasm. It is found in the nucleus. It carries out the reaction Cleavage of peptide bonds with very broad specificity.. Its function is as follows. Component of the 20S core proteasome complex involved in the proteolytic degradation of most intracellular proteins. This complex plays numerous essential roles within the cell by associating with different regulatory particles. Associated with two 19S regulatory particles, forms the 26S proteasome and thus participates in the ATP-dependent degradation of ubiquitinated proteins. The 26S proteasome plays a key role in the maintenance of protein homeostasis by removing misfolded or damaged proteins that could impair cellular functions, and by removing proteins whose functions are no longer required. The sequence is that of Proteasome subunit pbs-5 from Caenorhabditis elegans.